Reading from the N-terminus, the 111-residue chain is Nucleoid-associated protein VF_1686 (111 aa).

2 disordered regions span residues 1-23 (MFGG…DRMQ) and 89-111 (TQKE…KMPF).

This sequence belongs to the YbaB/EbfC family. Homodimer.

It localises to the cytoplasm. It is found in the nucleoid. Binds to DNA and alters its conformation. May be involved in regulation of gene expression, nucleoid organization and DNA protection. The sequence is that of Nucleoid-associated protein VF_1686 from Aliivibrio fischeri (strain ATCC 700601 / ES114) (Vibrio fischeri).